Reading from the N-terminus, the 230-residue chain is Fibrillarin-like rRNA/tRNA 2'-O-methyltransferase (230 aa).

Residues threonine 87–threonine 88, glutamate 105–phenylalanine 106, aspartate 130–alanine 131, and aspartate 150–glutamine 153 contribute to the S-adenosyl-L-methionine site.

It belongs to the methyltransferase superfamily. Fibrillarin family. As to quaternary structure, interacts with nop5. Component of box C/D small ribonucleoprotein (sRNP) particles that contain rpl7ae, FlpA and nop5, plus a guide RNA.

In terms of biological role, involved in pre-rRNA and tRNA processing. Utilizes the methyl donor S-adenosyl-L-methionine to catalyze the site-specific 2'-hydroxyl methylation of ribose moieties in rRNA and tRNA. Site specificity is provided by a guide RNA that base pairs with the substrate. Methylation occurs at a characteristic distance from the sequence involved in base pairing with the guide RNA. The polypeptide is Fibrillarin-like rRNA/tRNA 2'-O-methyltransferase (Methanococcus maripaludis (strain C6 / ATCC BAA-1332)).